The following is a 119-amino-acid chain: Large ribosomal subunit protein bL20 (119 aa).

This sequence belongs to the bacterial ribosomal protein bL20 family.

Binds directly to 23S ribosomal RNA and is necessary for the in vitro assembly process of the 50S ribosomal subunit. It is not involved in the protein synthesizing functions of that subunit. The polypeptide is Large ribosomal subunit protein bL20 (Acinetobacter baumannii (strain SDF)).